We begin with the raw amino-acid sequence, 164 residues long: MRVGLGYDVHKLGYNTPLILGGVNIPFNKGLIGHSDADVLVHAIMDALLGALSLGDIGKHFPPSDMKYKNISSLKLLNYVSNLIKSKGYSIGNIDSTIIAEEPKLFPYIPDMRLNIAKILKVNTSIISVKATTEEGLGFTGKKEGIAAQSICLLYNNLKHSIDL.

2 residues coordinate a divalent metal cation: D8 and H10. Residues 8-10 (DVH) and 34-35 (HS) each bind 4-CDP-2-C-methyl-D-erythritol 2-phosphate. Residue H42 participates in a divalent metal cation binding. 4-CDP-2-C-methyl-D-erythritol 2-phosphate contacts are provided by residues 56-58 (DIG), 132-135 (TTEE), F139, and K142.

Belongs to the IspF family. In terms of assembly, homotrimer. It depends on a divalent metal cation as a cofactor.

It catalyses the reaction 4-CDP-2-C-methyl-D-erythritol 2-phosphate = 2-C-methyl-D-erythritol 2,4-cyclic diphosphate + CMP. It functions in the pathway isoprenoid biosynthesis; isopentenyl diphosphate biosynthesis via DXP pathway; isopentenyl diphosphate from 1-deoxy-D-xylulose 5-phosphate: step 4/6. Involved in the biosynthesis of isopentenyl diphosphate (IPP) and dimethylallyl diphosphate (DMAPP), two major building blocks of isoprenoid compounds. Catalyzes the conversion of 4-diphosphocytidyl-2-C-methyl-D-erythritol 2-phosphate (CDP-ME2P) to 2-C-methyl-D-erythritol 2,4-cyclodiphosphate (ME-CPP) with a corresponding release of cytidine 5-monophosphate (CMP). The sequence is that of 2-C-methyl-D-erythritol 2,4-cyclodiphosphate synthase from Clostridium kluyveri (strain NBRC 12016).